A 285-amino-acid polypeptide reads, in one-letter code: Undecaprenyl-diphosphatase 2 (285 aa).

8 helical membrane passes run 5 to 25 (MDLL…LLPV), 47 to 67 (MTFL…VYFW), 86 to 106 (WYVL…QSLI), 122 to 142 (LFSN…LIIL), 156 to 176 (LPSA…RGFS), 198 to 218 (FSFA…LVRL), 235 to 255 (SLLL…LLAL), and 265 to 285 (GRWY…LTLA).

Belongs to the UppP family.

The protein resides in the cell inner membrane. It carries out the reaction di-trans,octa-cis-undecaprenyl diphosphate + H2O = di-trans,octa-cis-undecaprenyl phosphate + phosphate + H(+). In terms of biological role, catalyzes the dephosphorylation of undecaprenyl diphosphate (UPP). Confers resistance to bacitracin. The sequence is that of Undecaprenyl-diphosphatase 2 from Acinetobacter baylyi (strain ATCC 33305 / BD413 / ADP1).